Here is a 672-residue protein sequence, read N- to C-terminus: Acetyl-coenzyme A synthetase (672 aa).

Residues 205–208 (RGGK) and Thr-325 each bind CoA. Residues 401–403 (GEP), 425–430 (DTYWQT), Asp-516, and Arg-531 contribute to the ATP site. Residue Ser-539 coordinates CoA. Position 542 (Arg-542) interacts with ATP. Arg-600 lines the CoA pocket.

The protein belongs to the ATP-dependent AMP-binding enzyme family.

The catalysed reaction is acetate + ATP + CoA = acetyl-CoA + AMP + diphosphate. The chain is Acetyl-coenzyme A synthetase (facA) from Phycomyces blakesleeanus (strain ATCC 8743b / DSM 1359 / FGSC 10004 / NBRC 33097 / NRRL 1555).